Here is a 655-residue protein sequence, read N- to C-terminus: MLAAKNILNRSSLSSSFRIATRLQSTKVQGSVIGIDLGTTNSAVAIMEGKVPKIIENAEGSRTTPSVVAFTKEGERLVGIPAKRQAVVNPENTLFATKRLIGRRFEDAEVQRDIKQVPYKIVKHSNGDAWVEARGQTYSPAQIGGFVLNKMKETAEAYLGKPVKNAVVTVPAYFNDSQRQATKDAGQIVGLNVLRVVNEPTAAALAYGLEKSDSKVVAVFDLGGGTFDISILDIDNGVFEVKSTNGDTHLGGEDFDIYLLREIVSRFKTETGIDLENDRMAIQRIREAAEKAKIELSSTVSTEINLPFITADASGPKHINMKFSRAQFETLTAPLVKRTVDPVKKALKDAGLSTSDISEVLLVGGMSRMPKVVETVKSLFGKDPSKAVNPDEAVAIGAAVQGAVLSGEVTDVLLLDVTPLSLGIETLGGVFTRLIPRNTTIPTKKSQIFSTAAAGQTSVEIRVFQGERELVRDNKLIGNFTLAGIPPAPKGVPQIEVTFDIDADGIINVSARDKATNKDSSITVAGSSGLSENEIEQMVNDAEKFKSQDEARKQAIETANKADQLANDTENSLKEFEGKVDKAEAQKVRDQITSLKELVARVQGGEEVNAEELKTKTEELQTSSMKLFEQLYKNDSNNNNNNNNGNNAESDETKQ.

Residues 1 to 23 constitute a mitochondrion transit peptide; sequence MLAAKNILNRSSLSSSFRIATRL. Residue Thr-330 is modified to Phosphothreonine. Residues 629 to 655 are disordered; that stretch reads EQLYKNDSNNNNNNNNGNNAESDETKQ. The span at 637 to 647 shows a compositional bias: low complexity; that stretch reads NNNNNNNNGNN.

This sequence belongs to the heat shock protein 70 family. Component of the PAM complex, at least composed of SSC1 (mtHsp70), MGE1, TIM44, PAM16/TIM16, PAM17 and PAM18/TIM14. In the complex, SSC1 interacts directly with PAM18 and TIM44. Interacts with NAP1. Component of endonuclease SceI (endo.SceI), which is a heterodimer of ENS2 and SSC1.

The protein localises to the mitochondrion matrix. The catalysed reaction is ATP + H2O = ADP + phosphate + H(+). Its function is as follows. Essential component of the PAM complex, a complex required for the translocation of transit peptide-containing proteins from the inner membrane into the mitochondrial matrix in an ATP-dependent manner. Constitutes the ATP-driven core of the motor and binds the precursor preprotein. Required for the import of the processed frataxin homolog YFH1 into the mitochondrion. In terms of biological role, acts as a non-catalytic component of endonuclease SceI (endo.SceI), which cleaves specifically at multiple sites on mitochondrial DNA and produces double-stranded breaks. SSC1 confers broader sequence specificity, greater stability, and higher activity on the catalytic subunit. The polypeptide is Import motor subunit, mitochondrial (Saccharomyces cerevisiae (Baker's yeast)).